Reading from the N-terminus, the 178-residue chain is ATP-dependent protease subunit HslV (178 aa).

Residue Thr-5 is part of the active site. Residues Gly-161, Cys-164, and Thr-167 each contribute to the Na(+) site.

This sequence belongs to the peptidase T1B family. HslV subfamily. As to quaternary structure, a double ring-shaped homohexamer of HslV is capped on each side by a ring-shaped HslU homohexamer. The assembly of the HslU/HslV complex is dependent on binding of ATP.

Its subcellular location is the cytoplasm. It catalyses the reaction ATP-dependent cleavage of peptide bonds with broad specificity.. Allosterically activated by HslU binding. Functionally, protease subunit of a proteasome-like degradation complex believed to be a general protein degrading machinery. In Aliarcobacter butzleri (strain RM4018) (Arcobacter butzleri), this protein is ATP-dependent protease subunit HslV.